The primary structure comprises 271 residues: MGLEEKLPGGVLLASVEKLANWSRRSSLWPATFGLACCAIEMMSTGAGRYDLSRFGMEVFRASPRQADLMIVAGRVSQKMAPVLRQIYDQMPEPKWVLSMGVCASSGGMFNNYAIVQGVDHIVPVDMYLPGCPPRPEMLMDAIIKLHEKILAGPISGRIEHTKIGSSPYPKPIEVATARAGLPEGAFDTRTLSVNDRKRFSIPAGAPAPTGGGAVEPALDTRRPAALAPPSVFGRAKRIPVDPKPSDEARAHGPGPTTESIGDVDGPDRGI.

Positions 37, 38, 103, and 132 each coordinate [4Fe-4S] cluster. Positions 227 to 271 (LAPPSVFGRAKRIPVDPKPSDEARAHGPGPTTESIGDVDGPDRGI) are disordered. Basic and acidic residues predominate over residues 239–251 (IPVDPKPSDEARA).

Belongs to the complex I 20 kDa subunit family. NDH-1 is composed of 14 different subunits. Subunits NuoB, C, D, E, F, and G constitute the peripheral sector of the complex. Requires [4Fe-4S] cluster as cofactor.

It localises to the cell membrane. It catalyses the reaction a quinone + NADH + 5 H(+)(in) = a quinol + NAD(+) + 4 H(+)(out). NDH-1 shuttles electrons from NADH, via FMN and iron-sulfur (Fe-S) centers, to quinones in the respiratory chain. The immediate electron acceptor for the enzyme in this species is believed to be a menaquinone. Couples the redox reaction to proton translocation (for every two electrons transferred, four hydrogen ions are translocated across the cytoplasmic membrane), and thus conserves the redox energy in a proton gradient. In Frankia casuarinae (strain DSM 45818 / CECT 9043 / HFP020203 / CcI3), this protein is NADH-quinone oxidoreductase subunit B.